An 85-amino-acid polypeptide reads, in one-letter code: Makatoxin-3 (85 aa).

An N-terminal signal peptide occupies residues 1-19 (MNYLIVISFALLLMTGVES). The LCN-type CS-alpha/beta domain occupies 21–83 (RDAYIAKKEN…VPIRIPGPCI (63 aa)). Cystine bridges form between C31/C82, C35/C55, C41/C65, and C45/C67.

This sequence belongs to the long (4 C-C) scorpion toxin superfamily. Sodium channel inhibitor family. Alpha subfamily. Expressed by the venom gland.

The protein localises to the secreted. In terms of biological role, this protein markedly relaxes the rat carbachol-precontracted anococcygeus muscle. This relaxation is inhibited by the inhibitor of nitric oxide (NO) synthase, N-nitro-L-arginine methyl ester (L-NAME), suggesting that the response induced by this protein is NO-mediated. This Olivierus martensii (Manchurian scorpion) protein is Makatoxin-3.